The sequence spans 273 residues: 2,3,4,5-tetrahydropyridine-2,6-dicarboxylate N-succinyltransferase (273 aa).

Substrate is bound by residues Arg-104 and Asp-141.

This sequence belongs to the transferase hexapeptide repeat family. Homotrimer.

The protein resides in the cytoplasm. The catalysed reaction is (S)-2,3,4,5-tetrahydrodipicolinate + succinyl-CoA + H2O = (S)-2-succinylamino-6-oxoheptanedioate + CoA. It functions in the pathway amino-acid biosynthesis; L-lysine biosynthesis via DAP pathway; LL-2,6-diaminopimelate from (S)-tetrahydrodipicolinate (succinylase route): step 1/3. The polypeptide is 2,3,4,5-tetrahydropyridine-2,6-dicarboxylate N-succinyltransferase (Neisseria meningitidis serogroup C (strain 053442)).